The sequence spans 405 residues: L-carnitine CoA-transferase (405 aa).

CoA is bound by residues Lys-97 and Arg-104. Residue Asp-169 is the Nucleophile of the active site.

Belongs to the CoA-transferase III family. CaiB subfamily. In terms of assembly, homodimer.

It is found in the cytoplasm. The enzyme catalyses crotonobetainyl-CoA + (R)-carnitine = crotonobetaine + (R)-carnitinyl-CoA. It carries out the reaction 4-(trimethylamino)butanoyl-CoA + (R)-carnitine = (R)-carnitinyl-CoA + 4-(trimethylamino)butanoate. It functions in the pathway amine and polyamine metabolism; carnitine metabolism. Its function is as follows. Catalyzes the reversible transfer of the CoA moiety from gamma-butyrobetainyl-CoA to L-carnitine to generate L-carnitinyl-CoA and gamma-butyrobetaine. Is also able to catalyze the reversible transfer of the CoA moiety from gamma-butyrobetainyl-CoA or L-carnitinyl-CoA to crotonobetaine to generate crotonobetainyl-CoA. This Escherichia coli (strain SE11) protein is L-carnitine CoA-transferase.